A 529-amino-acid polypeptide reads, in one-letter code: Structure-specific endonuclease subunit SLX1 homolog 1 (529 aa).

The region spanning 4–89 (RFHCVYLLTS…PTKSTRLKTQ (86 aa)) is the GIY-YIG domain. An SLX1-type zinc finger spans residues 231 to 364 (CALCSLPLRS…PCQPCPCPLC (134 aa)). Disordered regions lie at residues 275 to 305 (VTMG…MDAH), 409 to 437 (NSSL…YCGD), and 470 to 501 (SVSL…RMTD). Positions 282 to 297 (RNERSGEYSNKIKDDS) are enriched in basic and acidic residues.

This sequence belongs to the SLX1 family. Forms a heterodimer with a member of the SLX4 family. A divalent metal cation is required as a cofactor.

The protein localises to the nucleus. Functionally, catalytic subunit of a heterodimeric structure-specific endonuclease that resolves DNA secondary structures generated during DNA repair and recombination. Has endonuclease activity towards branched DNA substrates, introducing single-strand cuts in duplex DNA close to junctions with ss-DNA. This Trypanosoma cruzi (strain CL Brener) protein is Structure-specific endonuclease subunit SLX1 homolog 1.